Here is a 223-residue protein sequence, read N- to C-terminus: Ribonuclease T (223 aa).

An Exonuclease domain is found at 20-195 (VVIDVETAGF…YDTERTAELF (176 aa)). Residues Asp23, Glu25, His182, and Asp187 each coordinate Mg(2+). His182 serves as the catalytic Proton donor/acceptor.

The protein belongs to the RNase T family. As to quaternary structure, homodimer. The cofactor is Mg(2+).

In terms of biological role, trims short 3' overhangs of a variety of RNA species, leaving a one or two nucleotide 3' overhang. Responsible for the end-turnover of tRNA: specifically removes the terminal AMP residue from uncharged tRNA (tRNA-C-C-A). Also appears to be involved in tRNA biosynthesis. This chain is Ribonuclease T, found in Photobacterium profundum (strain SS9).